Consider the following 359-residue polypeptide: Methylthioribose-1-phosphate isomerase (359 aa).

D235 serves as the catalytic Proton donor.

It belongs to the eIF-2B alpha/beta/delta subunits family. MtnA subfamily.

The protein resides in the cytoplasm. The protein localises to the nucleus. It catalyses the reaction 5-(methylsulfanyl)-alpha-D-ribose 1-phosphate = 5-(methylsulfanyl)-D-ribulose 1-phosphate. The protein operates within amino-acid biosynthesis; L-methionine biosynthesis via salvage pathway; L-methionine from S-methyl-5-thio-alpha-D-ribose 1-phosphate: step 1/6. Catalyzes the interconversion of methylthioribose-1-phosphate (MTR-1-P) into methylthioribulose-1-phosphate (MTRu-1-P). The protein is Methylthioribose-1-phosphate isomerase (mri1) of Schizosaccharomyces pombe (strain 972 / ATCC 24843) (Fission yeast).